The primary structure comprises 104 residues: DNA-binding transcriptional repressor TubR (104 aa).

DNA-binding regions (HTH) lie at residues 43–50 (KTAVAEMI) and 54–65 (KPTVFATVNSFY).

In terms of assembly, homodimer. Binds to tubC DNA, the TubR-DNA complex binds to TubZ.

In terms of biological role, a DNA-binding protein that is part of the type III plasmid partition system used to ensure correct segregation of the pBtoxis plasmid. Cooperatively binds to the centromere-like site (tubC), which may seed filament formation by the TubZ polymerizing GTPase, stabilizing TubZ filaments. TubR-tubC complexes track the depolymerizing minus end of the filament, probably pulling plasmid within the cell. Required for plasmid replication. Negatively regulates levels of TubZ; its effect on RNA expression has not been shown. Specifically binds iterons, 12-bp imperfect direct repeats that function as a plasmid origin of replication. Four TubR dimers bind to tubC, forming an extended bent DNA-protein filament with protein wrapping helically around the outside of the DNA. This is DNA-binding transcriptional repressor TubR from Bacillus thuringiensis subsp. israelensis.